Reading from the N-terminus, the 64-residue chain is Relaxin (64 aa).

3 disulfides stabilise this stretch: C11/C51, C23/C64, and C50/C55.

The protein belongs to the insulin family. As to quaternary structure, heterodimer of a B chain and an A chain linked by two disulfide bonds.

The protein localises to the secreted. This is Relaxin from Leucoraja erinaceus (Little skate).